Here is a 556-residue protein sequence, read N- to C-terminus: Arginine--tRNA ligase 1 (556 aa).

Residues A132–H142 carry the 'HIGH' region motif.

The protein belongs to the class-I aminoacyl-tRNA synthetase family. Monomer.

It localises to the cytoplasm. The catalysed reaction is tRNA(Arg) + L-arginine + ATP = L-arginyl-tRNA(Arg) + AMP + diphosphate. The polypeptide is Arginine--tRNA ligase 1 (Bacillus anthracis).